We begin with the raw amino-acid sequence, 445 residues long: 3-phosphoshikimate 1-carboxyvinyltransferase (445 aa).

The tract at residues 1–25 (MTDSNQPTPLQARKSGALHGTARVP) is disordered. K28, S29, and R33 together coordinate 3-phosphoshikimate. K28 contributes to the phosphoenolpyruvate binding site. Phosphoenolpyruvate contacts are provided by G101 and R129. 3-phosphoshikimate contacts are provided by S175, Q177, D328, and K355. Phosphoenolpyruvate is bound at residue Q177. The Proton acceptor role is filled by D328. Residues R359 and R402 each coordinate phosphoenolpyruvate.

Belongs to the EPSP synthase family. Monomer.

It is found in the cytoplasm. The enzyme catalyses 3-phosphoshikimate + phosphoenolpyruvate = 5-O-(1-carboxyvinyl)-3-phosphoshikimate + phosphate. It functions in the pathway metabolic intermediate biosynthesis; chorismate biosynthesis; chorismate from D-erythrose 4-phosphate and phosphoenolpyruvate: step 6/7. In terms of biological role, catalyzes the transfer of the enolpyruvyl moiety of phosphoenolpyruvate (PEP) to the 5-hydroxyl of shikimate-3-phosphate (S3P) to produce enolpyruvyl shikimate-3-phosphate and inorganic phosphate. The polypeptide is 3-phosphoshikimate 1-carboxyvinyltransferase (Rhodopseudomonas palustris (strain TIE-1)).